The primary structure comprises 130 residues: Flagellar assembly factor FliW (130 aa).

This sequence belongs to the FliW family. In terms of assembly, interacts with translational regulator CsrA and flagellin(s).

It localises to the cytoplasm. Acts as an anti-CsrA protein, binds CsrA and prevents it from repressing translation of its target genes, one of which is flagellin. Binds to flagellin and participates in the assembly of the flagellum. This chain is Flagellar assembly factor FliW, found in Borrelia duttonii (strain Ly).